The primary structure comprises 183 residues: Capsid protein (183 aa).

The interval 136 to 183 is disordered; it reads NAPILSTLPETTVVRRRGRSPRRRTPSPRRRRSQSPRRRRSQSRESQC. Basic residues predominate over residues 149–176; the sequence is VRRRGRSPRRRTPSPRRRRSQSPRRRRS. Phosphoserine; by host is present on residues serine 155, serine 162, and serine 170. The stretch at 155 to 161 is one 1; half-length repeat; that stretch reads SPRRRTP. The tract at residues 155–177 is 3 X 8 AA repeats of S-P-R-R-R-[PR]-S-Q; the sequence is SPRRRTPSPRRRRSQSPRRRRSQ. A Bipartite nuclear localization signal motif is present at residues 158–175; that stretch reads RRTPSPRRRRSQSPRRRR. 2 repeat units span residues 162–169 and 170–177. The RNA binding stretch occupies residues 177 to 183; that stretch reads QSRESQC.

It belongs to the orthohepadnavirus core antigen family. Homodimerizes, then multimerizes. Interacts with cytosol exposed regions of viral L glycoprotein present in the reticulum-to-Golgi compartment. Interacts with human FLNB. Phosphorylated form interacts with host importin alpha; this interaction depends on the exposure of the NLS, which itself depends upon genome maturation and/or phosphorylation of the capsid protein. Interacts with host NUP153. Phosphorylated by host SRPK1, SRPK2, and maybe protein kinase C or GAPDH. Phosphorylation is critical for pregenomic RNA packaging. Protein kinase C phosphorylation is stimulated by HBx protein and may play a role in transport of the viral genome to the nucleus at the late step during the viral replication cycle.

Its subcellular location is the virion. The protein localises to the host cytoplasm. In terms of biological role, self assembles to form an icosahedral capsid. Most capsids appear to be large particles with an icosahedral symmetry of T=4 and consist of 240 copies of capsid protein, though a fraction forms smaller T=3 particles consisting of 180 capsid proteins. Entering capsids are transported along microtubules to the nucleus. Phosphorylation of the capsid is thought to induce exposure of nuclear localization signal in the C-terminal portion of the capsid protein that allows binding to the nuclear pore complex via the importin (karyopherin-) alpha and beta. Capsids are imported in intact form through the nuclear pore into the nuclear basket, where it probably binds NUP153. Only capsids that contain the mature viral genome can release the viral DNA and capsid protein into the nucleoplasm. Immature capsids get stuck in the basket. Capsids encapsulate the pre-genomic RNA and the P protein. Pre-genomic RNA is reverse-transcribed into DNA while the capsid is still in the cytoplasm. The capsid can then either be directed to the nucleus, providing more genomes for transcription, or bud through the endoplasmic reticulum to provide new virions. The chain is Capsid protein from Homo sapiens (Human).